A 788-amino-acid polypeptide reads, in one-letter code: 5-methyltetrahydropteroyltriglutamate--homocysteine methyltransferase (788 aa).

5-methyltetrahydropteroyltri-L-glutamate is bound by residues 24–27 (RELK) and Lys-140. L-homocysteine contacts are provided by residues 463-465 (IGS) and Glu-516. L-methionine-binding positions include 463–465 (IGS) and Glu-516. 5-methyltetrahydropteroyltri-L-glutamate is bound by residues 547 to 548 (RC) and Trp-593. Asp-631 contributes to the L-homocysteine binding site. Asp-631 is a binding site for L-methionine. Glu-637 contributes to the 5-methyltetrahydropteroyltri-L-glutamate binding site. Positions 673, 675, and 697 each coordinate Zn(2+). Catalysis depends on His-726, which acts as the Proton donor. Residue Cys-758 coordinates Zn(2+).

It belongs to the vitamin-B12 independent methionine synthase family. Zn(2+) serves as cofactor.

It carries out the reaction 5-methyltetrahydropteroyltri-L-glutamate + L-homocysteine = tetrahydropteroyltri-L-glutamate + L-methionine. It participates in amino-acid biosynthesis; L-methionine biosynthesis via de novo pathway; L-methionine from L-homocysteine (MetE route): step 1/1. In terms of biological role, catalyzes the transfer of a methyl group from 5-methyltetrahydrofolate to homocysteine resulting in methionine formation. This chain is 5-methyltetrahydropteroyltriglutamate--homocysteine methyltransferase, found in Rhodopseudomonas palustris (strain TIE-1).